A 269-amino-acid polypeptide reads, in one-letter code: Type III pantothenate kinase (269 aa).

9 to 16 (DVGNTSVK) contributes to the ATP binding site. Substrate is bound by residues Y106 and 113 to 116 (GADR). The Proton acceptor role is filled by D115. D137 is a binding site for K(+). Residue T140 participates in ATP binding. Substrate is bound at residue T193.

This sequence belongs to the type III pantothenate kinase family. In terms of assembly, homodimer. The cofactor is NH4(+). K(+) serves as cofactor.

The protein localises to the cytoplasm. The catalysed reaction is (R)-pantothenate + ATP = (R)-4'-phosphopantothenate + ADP + H(+). The protein operates within cofactor biosynthesis; coenzyme A biosynthesis; CoA from (R)-pantothenate: step 1/5. Functionally, catalyzes the phosphorylation of pantothenate (Pan), the first step in CoA biosynthesis. In Lawsonia intracellularis (strain PHE/MN1-00), this protein is Type III pantothenate kinase.